Here is a 126-residue protein sequence, read N- to C-terminus: Nuclear transport factor 2B (126 aa).

S2 carries the post-translational modification N-acetylserine. One can recognise an NTF2 domain in the interval 9–123; that stretch reads VSKAFVEHYY…FYVFNDIFRL (115 aa).

As to quaternary structure, interacts with RAN1. In terms of tissue distribution, expressed in roots, stems, leaves and flowers, and, at low levels, in siliques.

The protein resides in the cytoplasm. The protein localises to the nucleus. It localises to the nucleus envelope. Facilitates protein transport into the nucleus. Interacts with various nucleoporins and with Ran-GDP. Could be part of a multicomponent system of cytosolic factors that assemble at the pore complex during nuclear import. This Arabidopsis thaliana (Mouse-ear cress) protein is Nuclear transport factor 2B.